Consider the following 228-residue polypeptide: 7-cyano-7-deazaguanine synthase (228 aa).

An ATP-binding site is contributed by 8 to 18 (LSGGMDSATTL). Positions 188, 198, 201, and 204 each coordinate Zn(2+).

Belongs to the QueC family. The cofactor is Zn(2+).

The enzyme catalyses 7-carboxy-7-deazaguanine + NH4(+) + ATP = 7-cyano-7-deazaguanine + ADP + phosphate + H2O + H(+). The protein operates within purine metabolism; 7-cyano-7-deazaguanine biosynthesis. Catalyzes the ATP-dependent conversion of 7-carboxy-7-deazaguanine (CDG) to 7-cyano-7-deazaguanine (preQ(0)). The protein is 7-cyano-7-deazaguanine synthase of Nitrosomonas europaea (strain ATCC 19718 / CIP 103999 / KCTC 2705 / NBRC 14298).